The following is a 58-amino-acid chain: Small ribosomal subunit protein bS21 (58 aa).

The protein belongs to the bacterial ribosomal protein bS21 family.

This is Small ribosomal subunit protein bS21 from Staphylococcus aureus (strain bovine RF122 / ET3-1).